The primary structure comprises 238 residues: ATP synthase subunit a (238 aa).

5 consecutive transmembrane segments (helical) span residues 15 to 35 (IFNL…FVFI), 76 to 96 (YSLF…LGLM), 111 to 131 (PTAN…LTHI), 167 to 187 (LALR…LLLL), and 208 to 230 (AFSV…VYLG).

The protein belongs to the ATPase A chain family. F-type ATPases have 2 components, CF(1) - the catalytic core - and CF(0) - the membrane proton channel. CF(1) has five subunits: alpha(3), beta(3), gamma(1), delta(1), epsilon(1). CF(0) has three main subunits: a(1), b(2) and c(9-12). The alpha and beta chains form an alternating ring which encloses part of the gamma chain. CF(1) is attached to CF(0) by a central stalk formed by the gamma and epsilon chains, while a peripheral stalk is formed by the delta and b chains.

It is found in the cell membrane. In terms of biological role, key component of the proton channel; it plays a direct role in the translocation of protons across the membrane. This Streptococcus pneumoniae (strain 70585) protein is ATP synthase subunit a.